The following is a 240-amino-acid chain: Phosphatidylserine decarboxylase proenzyme (240 aa).

The active-site Schiff-base intermediate with substrate; via pyruvic acid is the Ser-209. Ser-209 bears the Pyruvic acid (Ser); by autocatalysis mark.

Belongs to the phosphatidylserine decarboxylase family. PSD-A subfamily. In terms of assembly, heterodimer of a large membrane-associated beta subunit and a small pyruvoyl-containing alpha subunit. Requires pyruvate as cofactor. In terms of processing, is synthesized initially as an inactive proenzyme. Formation of the active enzyme involves a self-maturation process in which the active site pyruvoyl group is generated from an internal serine residue via an autocatalytic post-translational modification. Two non-identical subunits are generated from the proenzyme in this reaction, and the pyruvate is formed at the N-terminus of the alpha chain, which is derived from the carboxyl end of the proenzyme. The post-translation cleavage follows an unusual pathway, termed non-hydrolytic serinolysis, in which the side chain hydroxyl group of the serine supplies its oxygen atom to form the C-terminus of the beta chain, while the remainder of the serine residue undergoes an oxidative deamination to produce ammonia and the pyruvoyl prosthetic group on the alpha chain.

The protein resides in the cell membrane. It carries out the reaction a 1,2-diacyl-sn-glycero-3-phospho-L-serine + H(+) = a 1,2-diacyl-sn-glycero-3-phosphoethanolamine + CO2. It functions in the pathway phospholipid metabolism; phosphatidylethanolamine biosynthesis; phosphatidylethanolamine from CDP-diacylglycerol: step 2/2. In terms of biological role, catalyzes the formation of phosphatidylethanolamine (PtdEtn) from phosphatidylserine (PtdSer). The protein is Phosphatidylserine decarboxylase proenzyme of Mycobacterium ulcerans (strain Agy99).